Reading from the N-terminus, the 559-residue chain is DNA ligase (559 aa).

Position 247 (Glu-247) interacts with ATP. The active-site N6-AMP-lysine intermediate is Lys-249. 6 residues coordinate ATP: Arg-254, Arg-269, Glu-299, Phe-339, Arg-414, and Lys-420.

This sequence belongs to the ATP-dependent DNA ligase family. As to quaternary structure, monomer. Mg(2+) serves as cofactor.

The enzyme catalyses ATP + (deoxyribonucleotide)n-3'-hydroxyl + 5'-phospho-(deoxyribonucleotide)m = (deoxyribonucleotide)n+m + AMP + diphosphate.. The catalysed reaction is NAD(+) + (deoxyribonucleotide)n-3'-hydroxyl + 5'-phospho-(deoxyribonucleotide)m = (deoxyribonucleotide)n+m + AMP + beta-nicotinamide D-nucleotide.. In terms of biological role, DNA ligase that seals nicks in double-stranded DNA during DNA replication, DNA recombination and DNA repair. Can also use NAD, but less efficiently than ATP. The protein is DNA ligase of Thermococcus kodakarensis (strain ATCC BAA-918 / JCM 12380 / KOD1) (Pyrococcus kodakaraensis (strain KOD1)).